Consider the following 120-residue polypeptide: Large ribosomal subunit protein bL20 (120 aa).

This sequence belongs to the bacterial ribosomal protein bL20 family.

Its function is as follows. Binds directly to 23S ribosomal RNA and is necessary for the in vitro assembly process of the 50S ribosomal subunit. It is not involved in the protein synthesizing functions of that subunit. The sequence is that of Large ribosomal subunit protein bL20 from Methylacidiphilum infernorum (isolate V4) (Methylokorus infernorum (strain V4)).